Here is a 389-residue protein sequence, read N- to C-terminus: DEAD-box ATP-dependent RNA helicase CshC (389 aa).

The short motif at 1-26 is the Q motif element; that stretch reads MIKDMQPFLQQAWEKAGFKELTEIQK. Residues 29–199 form the Helicase ATP-binding domain; it reads IPTILEGQDV…RDLAVEPQLV (171 aa). 42–49 provides a ligand contact to ATP; sequence SPTGTGKT. A DEAD box motif is present at residues 147-150; that stretch reads DEFD. Positions 209 to 379 constitute a Helicase C-terminal domain; it reads LVEHTYIICE…TKPKAPKKKK (171 aa). The interval 368 to 389 is disordered; that stretch reads VETKPKAPKKKKPAFTGKKKPR. Over residues 373–389 the composition is skewed to basic residues; that stretch reads KAPKKKKPAFTGKKKPR.

The catalysed reaction is ATP + H2O = ADP + phosphate + H(+). DEAD-box RNA helicase. Probably has an RNA-dependent ATPase activity and a 3' to 5' RNA helicase activity that uses the energy of ATP hydrolysis to destabilize and unwind short RNA duplexes. This is DEAD-box ATP-dependent RNA helicase CshC (cshC) from Bacillus cereus (strain ATCC 14579 / DSM 31 / CCUG 7414 / JCM 2152 / NBRC 15305 / NCIMB 9373 / NCTC 2599 / NRRL B-3711).